Reading from the N-terminus, the 431-residue chain is MLDINTIRQHPEEIISMLHNRQLASEEPKIEQLLNLDRERKGLVQRSDDLKALRNKVSKEIAEIKKSGIGSSGELILQMKSVSEEIAGMDTSLGHLEEEIETILLGLPNKLHPSVPVGRSADDNQIFKEPISFPYHLDFPLKNHLELGKSLRILDFERGAKVCGAGFPVYIGKGARLERALINFMLDCHTERHGYTEVFPPFFVNQESLRGTGQWPKFADQVYHMEEDDLYAIPTAEVPITNLHRGEMLDTKTLPISYAAYSACFRREAGSYGKDTRGFLRVHQFNKVEMVKFTRPEESYEALETIRENAEAILTALKIPYRVLLLCSGDISANATKCYDIEVWSPAEQKYLEASSCSNFEDYQARRANIRFKSESNAKPEFVHTLNGSGLATSRLMVSLLEHYQTAEGSIMVPEVLRHYTRFDEITQAAE.

235–237 (TAE) lines the L-serine pocket. ATP contacts are provided by residues 266-268 (RRE) and Val-282. Residue Glu-289 participates in L-serine binding. Residue 353–356 (EASS) participates in ATP binding. Position 389 (Ser-389) interacts with L-serine.

This sequence belongs to the class-II aminoacyl-tRNA synthetase family. Type-1 seryl-tRNA synthetase subfamily. In terms of assembly, homodimer. The tRNA molecule binds across the dimer.

Its subcellular location is the cytoplasm. It catalyses the reaction tRNA(Ser) + L-serine + ATP = L-seryl-tRNA(Ser) + AMP + diphosphate + H(+). The catalysed reaction is tRNA(Sec) + L-serine + ATP = L-seryl-tRNA(Sec) + AMP + diphosphate + H(+). Its pathway is aminoacyl-tRNA biosynthesis; selenocysteinyl-tRNA(Sec) biosynthesis; L-seryl-tRNA(Sec) from L-serine and tRNA(Sec): step 1/1. Catalyzes the attachment of serine to tRNA(Ser). Is also able to aminoacylate tRNA(Sec) with serine, to form the misacylated tRNA L-seryl-tRNA(Sec), which will be further converted into selenocysteinyl-tRNA(Sec). The protein is Serine--tRNA ligase of Pelodictyon phaeoclathratiforme (strain DSM 5477 / BU-1).